Consider the following 584-residue polypeptide: UvrABC system protein C (584 aa).

In terms of domain architecture, GIY-YIG spans histidine 14–isoleucine 91. In terms of domain architecture, UVR spans aspartate 192–isoleucine 227.

It belongs to the UvrC family. In terms of assembly, interacts with UvrB in an incision complex.

The protein localises to the cytoplasm. Its function is as follows. The UvrABC repair system catalyzes the recognition and processing of DNA lesions. UvrC both incises the 5' and 3' sides of the lesion. The N-terminal half is responsible for the 3' incision and the C-terminal half is responsible for the 5' incision. This chain is UvrABC system protein C, found in Ureaplasma parvum serovar 3 (strain ATCC 27815 / 27 / NCTC 11736).